The sequence spans 465 residues: Hexokinase-4 (465 aa).

The region spanning 10–454 (AAKKEKVEQI…SGRGAALVSA (445 aa)) is the Hexokinase domain. A hexokinase small subdomain region spans residues 67 to 203 (EGSEVGDFLS…DFEMDVVAMV (137 aa)). Position 78–83 (78–83 (DLGGTN)) interacts with ATP. Substrate is bound by residues 151–152 (SF), 168–169 (TK), and 204–205 (ND). Residues 204–443 (NDTVATMISC…CEITFIESEE (240 aa)) form a hexokinase large subdomain region. Position 228 (T228) interacts with ATP. Substrate contacts are provided by N231, E256, and E290. Residues 295–296 (GK), 332–336 (TRFVS), and 411–415 (SVYKL) contribute to the ATP site.

This sequence belongs to the hexokinase family. Monomer. Interacts with MIDN; the interaction occurs preferentially at low glucose levels and results in inhibition of hexokinase activity. Interacts with GCKR; leading to sequestration in the nucleus.

Its subcellular location is the cytoplasm. The protein resides in the nucleus. It localises to the mitochondrion. It catalyses the reaction a D-hexose + ATP = a D-hexose 6-phosphate + ADP + H(+). The enzyme catalyses D-fructose + ATP = D-fructose 6-phosphate + ADP + H(+). The catalysed reaction is D-glucose + ATP = D-glucose 6-phosphate + ADP + H(+). It carries out the reaction D-mannose + ATP = D-mannose 6-phosphate + ADP + H(+). It participates in carbohydrate metabolism; hexose metabolism. Its pathway is carbohydrate degradation; glycolysis; D-glyceraldehyde 3-phosphate and glycerone phosphate from D-glucose: step 1/4. Subject to allosteric regulation. Low glucose and high fructose-6-phosphate triggers association with the inhibitor GCKR followed by sequestration in the nucleus. Catalyzes the phosphorylation of hexose, such as D-glucose, D-fructose and D-mannose, to hexose 6-phosphate (D-glucose 6-phosphate, D-fructose 6-phosphate and D-mannose 6-phosphate, respectively). Compared to other hexokinases, has a weak affinity for D-glucose, and is effective only when glucose is abundant. Mainly expressed in pancreatic beta cells and the liver and constitutes a rate-limiting step in glucose metabolism in these tissues. Since insulin secretion parallels glucose metabolism and the low glucose affinity of GCK ensures that it can change its enzymatic activity within the physiological range of glucose concentrations, GCK acts as a glucose sensor in the pancreatic beta cell. In pancreas, plays an important role in modulating insulin secretion. In liver, helps to facilitate the uptake and conversion of glucose by acting as an insulin-sensitive determinant of hepatic glucose usage. Required to provide D-glucose 6-phosphate for the synthesis of glycogen. Mediates the initial step of glycolysis by catalyzing phosphorylation of D-glucose to D-glucose 6-phosphate. The polypeptide is Hexokinase-4 (Homo sapiens (Human)).